The chain runs to 1902 residues: PII-type proteinase (1902 aa).

Positions 1-33 are cleaved as a signal peptide; the sequence is MQRKKKGLSILLAGTVALGALAVLPVGEIQAKA. Residues 34 to 187 constitute a propeptide that is removed on maturation; sequence AISQQTKVSS…VTLAKVYYPT (154 aa). The Peptidase S8 domain occupies 191 to 697; sequence ANSMANVQAV…AGLVDVKAAI (507 aa). Active-site charge relay system residues include aspartate 217, histidine 281, and serine 620. Residues 1793–1805 are compositionally biased toward low complexity; that stretch reads KTAGKGDDTTGTS. Positions 1793–1872 are disordered; that stretch reads KTAGKGDDTT…GKGALPKTAE (80 aa). The short motif at 1867 to 1871 is the LPXTG sorting signal element; the sequence is LPKTA. Position 1870 is a pentaglycyl murein peptidoglycan amidated threonine (threonine 1870). Positions 1871–1902 are cleaved as a propeptide — removed by sortase; the sequence is AETTERPAFGFLGVIVVSLMGVLGLKRKQREE.

This sequence belongs to the peptidase S8 family.

It localises to the secreted. The protein localises to the cell wall. It catalyses the reaction Endopeptidase activity with very broad specificity, although some subsite preference have been noted, e.g. large hydrophobic residues in the P1 and P4 positions, and Pro in the P2 position. Best known for its action on caseins, although it has been shown to hydrolyze hemoglobin and oxidized insulin B-chain.. Its function is as follows. Protease which breaks down milk proteins during the growth of the bacteria on milk. In Lacticaseibacillus paracasei (Lactobacillus paracasei), this protein is PII-type proteinase (prtP).